Here is a 126-residue protein sequence, read N- to C-terminus: Histone H2B 1/2/3/4/6 (126 aa).

Residues 1-12 (MPEPAKSAPAPK) are compositionally biased toward low complexity. A disordered region spans residues 1-36 (MPEPAKSAPAPKKGSKKAVTKTQKKGDKKRKKSRKE). N6-acetyllysine occurs at positions 6 and 13. A compositionally biased stretch (basic residues) spans 13 to 34 (KGSKKAVTKTQKKGDKKRKKSR). Serine 15 bears the Phosphoserine mark. Lysine 16 and lysine 21 each carry N6-acetyllysine. Lysine 121 is covalently cross-linked (Glycyl lysine isopeptide (Lys-Gly) (interchain with G-Cter in ubiquitin)).

Belongs to the histone H2B family. As to quaternary structure, the nucleosome is a histone octamer containing two molecules each of H2A, H2B, H3 and H4 assembled in one H3-H4 heterotetramer and two H2A-H2B heterodimers. The octamer wraps approximately 147 bp of DNA. Post-translationally, monoubiquitination of Lys-121 by the BRE1 gives a specific tag for epigenetic transcriptional activation and is also prerequisite for histone H3 'Lys-4' and 'Lys-79' methylation. Phosphorylated on Ser-15 during apoptosis; which facilitates apoptotic chromatin condensation.

The protein localises to the nucleus. It is found in the chromosome. Functionally, core component of nucleosome. Nucleosomes wrap and compact DNA into chromatin, limiting DNA accessibility to the cellular machineries which require DNA as a template. Histones thereby play a central role in transcription regulation, DNA repair, DNA replication and chromosomal stability. DNA accessibility is regulated via a complex set of post-translational modifications of histones, also called histone code, and nucleosome remodeling. In terms of biological role, has broad-spectrum antibacterial activity. May be important in the antimicrobial defenses of chick reproductive system during follicle development in the ovary and egg formation in the oviduct. In Gallus gallus (Chicken), this protein is Histone H2B 1/2/3/4/6 (H2B-I).